The primary structure comprises 520 residues: GMP synthase [glutamine-hydrolyzing] (520 aa).

In terms of domain architecture, Glutamine amidotransferase type-1 spans 13–205 (KIIVLDYGSQ…ALNICKAKGD (193 aa)). The active-site Nucleophile is the cysteine 90. Active-site residues include histidine 179 and glutamate 181. Residues 206–395 (WSMDNFIDMQ…LGMPDHIVWR (190 aa)) form the GMPS ATP-PPase domain. Residue 233–239 (SGGVDSS) participates in ATP binding.

In terms of assembly, homodimer.

It carries out the reaction XMP + L-glutamine + ATP + H2O = GMP + L-glutamate + AMP + diphosphate + 2 H(+). It functions in the pathway purine metabolism; GMP biosynthesis; GMP from XMP (L-Gln route): step 1/1. In terms of biological role, catalyzes the synthesis of GMP from XMP. This chain is GMP synthase [glutamine-hydrolyzing], found in Streptococcus pneumoniae (strain CGSP14).